Consider the following 490-residue polypeptide: Cobyric acid synthase (490 aa).

One can recognise a GATase cobBQ-type domain in the interval 253 to 440 (KLRVAAPAAP…LHGVFDEPAA (188 aa)). Cys-334 serves as the catalytic Nucleophile. The active site involves His-432.

Belongs to the CobB/CobQ family. CobQ subfamily.

The protein operates within cofactor biosynthesis; adenosylcobalamin biosynthesis. In terms of biological role, catalyzes amidations at positions B, D, E, and G on adenosylcobyrinic A,C-diamide. NH(2) groups are provided by glutamine, and one molecule of ATP is hydrogenolyzed for each amidation. This chain is Cobyric acid synthase, found in Chromobacterium violaceum (strain ATCC 12472 / DSM 30191 / JCM 1249 / CCUG 213 / NBRC 12614 / NCIMB 9131 / NCTC 9757 / MK).